Consider the following 554-residue polypeptide: Tetratricopeptide repeat protein 34 (554 aa).

8 TPR repeats span residues 38 to 71 (ETSC…RPQA), 166 to 199 (SESL…EPGN), 200 to 233 (VKAL…DPGT), 294 to 327 (PSWR…TPSS), 328 to 361 (EAAQ…DTQD), 411 to 445 (NPYH…PAED), 452 to 485 (SEDF…APAQ), and 500 to 533 (ASVF…DPSH).

This Mus musculus (Mouse) protein is Tetratricopeptide repeat protein 34 (Ttc34).